We begin with the raw amino-acid sequence, 664 residues long: uncharacterized protein (664 aa).

This is an uncharacterized protein from Sinorhizobium fredii (strain NBRC 101917 / NGR234).